A 517-amino-acid chain; its full sequence is Dopamine receptor 4 (517 aa).

Residues Met1–Ala46 are Extracellular-facing. An N-linked (GlcNAc...) asparagine glycan is attached at Asn25. The chain crosses the membrane as a helical span at residues Ile47–Val67. Topologically, residues Cys68–Thr77 are cytoplasmic. A helical transmembrane segment spans residues Gly78–Met98. Residues Asn99 to Thr108 are Extracellular-facing. Asn106 carries N-linked (GlcNAc...) asparagine glycosylation. The chain crosses the membrane as a helical span at residues Trp109 to Ala129. The Cytoplasmic portion of the chain corresponds to Ser130 to Arg159. The helical transmembrane segment at Ile160–Ile180 threads the bilayer. The Extracellular portion of the chain corresponds to Trp181–Ser209. A helical membrane pass occupies residues Leu210–Ile230. Residues Ala231–Thr409 lie on the Cytoplasmic side of the membrane. The segment at Asn309–Ser339 is disordered. A helical transmembrane segment spans residues Leu410–Leu430. The Extracellular segment spans residues Thr431 to Glu442. Residues Thr443–Tyr463 form a helical membrane-spanning segment. Residues Ser464–Glu517 are Cytoplasmic-facing.

It belongs to the G-protein coupled receptor 1 family. In terms of tissue distribution, expressed in pharyngeal neurons I1 and I2, neurons ASG, AVL, CAN, PQR, vulva, intestine, rectal glands and rectal epithelial glands. Also expressed in neurons in ray 8 in males.

It is found in the cell membrane. In terms of biological role, receptor for dopamine. The activity of this receptor is mediated by G proteins which activate adenylyl cyclase. In terms of antagonist responses, would be classed with the D1-like dopamine receptor group. This is Dopamine receptor 4 (dop-4) from Caenorhabditis elegans.